Here is a 1481-residue protein sequence, read N- to C-terminus: Cystic fibrosis transmembrane conductance regulator (1481 aa).

Topologically, residues 1–77 (MQRSPLEKAS…KLINALRRCF (77 aa)) are cytoplasmic. The helical transmembrane segment at 78–98 (FWRFTFYGILLYLGEVTKAVQ) threads the bilayer. One can recognise an ABC transmembrane type-1 1 domain in the interval 81-365 (FTFYGILLYL…WAVQTWYDSL (285 aa)). Over 99–122 (PLLLGRIIASYDPDNKTERSIAIY) the chain is Extracellular. A helical transmembrane segment spans residues 123–146 (LGIGLCLLFIVRTLLLHPAIFGLH). The Cytoplasmic segment spans residues 147–195 (HIGMQMRIAMFSLIYKKTLKLSSRVLDKISIGQLVSLLSNNLNKFDEGL). The helical transmembrane segment at 196–216 (ALAHFVWIAPLQVALLMGLIW) threads the bilayer. The Extracellular portion of the chain corresponds to 217–222 (ELLQAS). The chain crosses the membrane as a helical span at residues 223-243 (AFCGLGFLIVLALFQAGLGRM). The Cytoplasmic segment spans residues 244 to 298 (MMKYRDQRAGKINERLVITSEMIENIQSVKAYCWEEAMEKIIENLRQTELKLTRK). Residues 299–319 (AAYVRYFNSSAFFFSGFFVVF) form a helical membrane-spanning segment. The Extracellular portion of the chain corresponds to 320–339 (LSVLPYALIKGIVLRKIFTT). A helical transmembrane segment spans residues 340–358 (ISFCIVLRMAVTRQFPWAV). The Cytoplasmic portion of the chain corresponds to 359-858 (QTWYDSLGAI…YLRYITLHKS (500 aa)). ATP-binding positions include Trp401, Ser434, 458–465 (GSTGAGKT), and Gln493. An ABC transporter 1 domain is found at 423 to 646 (NGDDNLFFSN…RPDFSSKLMG (224 aa)). Residue Cys524 is the site of S-palmitoyl cysteine attachment. 2 positions are modified to phosphoserine: Ser549 and Ser660. The segment at 654–831 (SSERRNSILT…EEINEEDLKE (178 aa)) is disordered R region. Residue Ser670 is modified to Phosphoserine; by PKA. Position 686 is a phosphoserine (Ser686). Residue Lys688 forms a Glycyl lysine isopeptide (Lys-Gly) (interchain with G-Cter in ubiquitin) linkage. 2 positions are modified to phosphoserine: Ser700 and Ser712. Thr717 is modified (phosphothreonine). A phosphoserine mark is found at Ser737, Ser753, Ser768, Ser790, Ser795, and Ser813. A helical transmembrane segment spans residues 859–879 (LIFVLIWCLVIFLAEVAASLV). The region spanning 859–1155 (LIFVLIWCLV…AVNSSIDVDS (297 aa)) is the ABC transmembrane type-1 2 domain. Over 880 to 918 (VLWLLGNTPFQDKGNSTYSRNNSYAVIITNTSSYYVFYI) the chain is Extracellular. 3 N-linked (GlcNAc...) asparagine glycosylation sites follow: Asn894, Asn900, and Asn909. The discontinuously helical transmembrane segment at 919–939 (YVGVADTLLALGFFRGLPLVH) threads the bilayer. Topologically, residues 940–990 (TLITVSKMLHHKMLHSVLQAPMSTLNTLKAGGILNRFSKDIAILDDLLPLT) are cytoplasmic. Residues 991-1011 (IFDFIQLLLIVIGAIAVVSVL) form a helical membrane-spanning segment. Residues 1012-1013 (QP) lie on the Extracellular side of the membrane. A helical transmembrane segment spans residues 1014-1034 (YIFLATVPVIAAFILLRAYFL). At 1035-1095 (QTSQQLKQLE…TANWFLYLST (61 aa)) the chain is on the cytoplasmic side. The chain crosses the membrane as a helical span at residues 1096 to 1116 (LRWFQMRIEMIFVIFFIAVTF). Residues 1117-1130 (ISILTTGEGEGTVG) lie on the Extracellular side of the membrane. The helical transmembrane segment at 1131–1151 (IILTLAMNIMSTLQWAVNSSI) threads the bilayer. Residues 1152–1481 (DVDSLMRSVS…TEEEVQETRL (330 aa)) are Cytoplasmic-facing. The 234-residue stretch at 1211-1444 (MTIKDLTAKY…KSLFRQAISH (234 aa)) folds into the ABC transporter 2 domain. Residues Tyr1220 and 1245–1252 (GRTGSGKS) contribute to the ATP site. Residues 1387 to 1481 (RALKQAFADC…TEEEVQETRL (95 aa)) form an interaction with GORASP2 region. Residue Cys1396 is the site of S-palmitoyl cysteine attachment. Phosphoserine is present on residues Ser1445 and Ser1457. Positions 1453–1481 (HRNSSKYKSQPQIASLKEETEEEVQETRL) are disordered. Acidic residues predominate over residues 1471-1481 (ETEEEVQETRL). The short motif at 1479-1481 (TRL) is the PDZ-binding element.

Belongs to the ABC transporter superfamily. ABCC family. CFTR transporter (TC 3.A.1.202) subfamily. As to quaternary structure, monomer; does not require oligomerization for channel activity. May form oligomers in the membrane. Interacts with SLC26A3, SLC26A6 and NHERF1. Interacts with SHANK2. Interacts with MYO6. Interacts (via C-terminus) with GOPC (via PDZ domain); this promotes CFTR internalization and thereby decreases channel activity. Interacts with SLC4A7 through NHERF1. Found in a complex with MYO5B and RAB11A. Interacts with ANO1. Interacts with SLC26A8. Interacts with AHCYL1; the interaction increases CFTR activity. Interacts with CSE1L. The core-glycosylated form interacts with GORASP2 (via PDZ GRASP-type 1 domain) in respone to ER stress. Interacts with MARCHF2; the interaction leads to CFTR ubiqtuitination and degradation. Interacts with ADGRG2. N-glycosylated. Post-translationally, phosphorylated; cAMP treatment promotes phosphorylation and activates the channel. Dephosphorylation decreases the ATPase activity (in vitro). Phosphorylation at PKA sites activates the channel. Phosphorylation at PKC sites enhances the response to phosphorylation by PKA. Phosphorylated by AMPK; this inhibits channel activity. In terms of processing, ubiquitinated, leading to its degradation in the lysosome. Deubiquitination by USP10 in early endosomes enhances its endocytic recycling to the cell membrane. Ubiquitinated by RNF185 during ER stress. Ubiquitinated by MARCHF2.

It localises to the apical cell membrane. Its subcellular location is the early endosome membrane. The protein localises to the cell membrane. It is found in the recycling endosome membrane. The protein resides in the endoplasmic reticulum membrane. It localises to the nucleus. It carries out the reaction ATP + H2O + closed Cl(-) channel = ADP + phosphate + open Cl(-) channel.. It catalyses the reaction chloride(in) = chloride(out). The catalysed reaction is hydrogencarbonate(in) = hydrogencarbonate(out). The enzyme catalyses ATP + H2O = ADP + phosphate + H(+). Functionally, epithelial ion channel that plays an important role in the regulation of epithelial ion and water transport and fluid homeostasis. Mediates the transport of chloride ions across the cell membrane. Possesses an intrinsic ATPase activity and utilizes ATP to gate its channel; the passive flow of anions through the channel is gated by cycles of ATP binding and hydrolysis by the ATP-binding domains. The ion channel is also permeable to HCO(3)(-); selectivity depends on the extracellular chloride concentration. Exerts its function also by modulating the activity of other ion channels and transporters. Contributes to the regulation of the pH and the ion content of the epithelial fluid layer. Modulates the activity of the epithelial sodium channel (ENaC) complex, in part by regulating the cell surface expression of the ENaC complex. May regulate bicarbonate secretion and salvage in epithelial cells by regulating the transporter SLC4A7. Can inhibit the chloride channel activity of ANO1. Plays a role in the chloride and bicarbonate homeostasis during sperm epididymal maturation and capacitation. The sequence is that of Cystic fibrosis transmembrane conductance regulator from Aotus nancymaae (Ma's night monkey).